The sequence spans 398 residues: Arylacetamide deacetylase (398 aa).

Residues G1 to T4 lie on the Cytoplasmic side of the membrane. A helical; Signal-anchor for type II membrane protein transmembrane segment spans residues V5–L22. The Lumenal portion of the chain corresponds to P23–V398. Residue N77 is glycosylated (N-linked (GlcNAc...) asparagine). Positions H110 to G112 match the Involved in the stabilization of the negatively charged intermediate by the formation of the oxyanion hole motif. C115 and C339 are joined by a disulfide. The active site involves S188. The N-linked (GlcNAc...) asparagine glycan is linked to N281. Catalysis depends on residues D342 and H372.

It belongs to the 'GDXG' lipolytic enzyme family. Post-translationally, glycosylated.

It is found in the endoplasmic reticulum membrane. The protein resides in the microsome membrane. The enzyme catalyses a triacylglycerol + H2O = a diacylglycerol + a fatty acid + H(+). Inhibited by diisopropylphosphofluoridate (DFP). In terms of biological role, displays cellular triglyceride lipase activity in liver, increases the levels of intracellular fatty acids derived from the hydrolysis of newly formed triglyceride stores and plays a role in very low-density lipoprotein assembly. Displays serine esterase activity in liver. Deacetylates a variety of arylacetamide substrates, including xenobiotic compounds and procarcinogens, converting them to the primary arylamide compounds and increasing their toxicity. In Oryctolagus cuniculus (Rabbit), this protein is Arylacetamide deacetylase.